Here is a 1059-residue protein sequence, read N- to C-terminus: Isoleucine--tRNA ligase (1059 aa).

Residues 47–57 (PYTTGHIHLGT) carry the 'HIGH' region motif. The 'KMSKS' region signature appears at 591 to 595 (KMSKS). Residue Lys594 coordinates ATP.

This sequence belongs to the class-I aminoacyl-tRNA synthetase family. IleS type 2 subfamily. As to quaternary structure, monomer. Zn(2+) serves as cofactor.

It localises to the cytoplasm. It carries out the reaction tRNA(Ile) + L-isoleucine + ATP = L-isoleucyl-tRNA(Ile) + AMP + diphosphate. Its function is as follows. Catalyzes the attachment of isoleucine to tRNA(Ile). As IleRS can inadvertently accommodate and process structurally similar amino acids such as valine, to avoid such errors it has two additional distinct tRNA(Ile)-dependent editing activities. One activity is designated as 'pretransfer' editing and involves the hydrolysis of activated Val-AMP. The other activity is designated 'posttransfer' editing and involves deacylation of mischarged Val-tRNA(Ile). This chain is Isoleucine--tRNA ligase, found in Methanoculleus marisnigri (strain ATCC 35101 / DSM 1498 / JR1).